Here is a 523-residue protein sequence, read N- to C-terminus: Putative F-box protein At1g30925 (523 aa).

Positions 4 to 44 (FPNDDLVYEILLRLPAKSVARCSCVSKLRRSILSRQDFTEL) constitute an F-box domain.

This chain is Putative F-box protein At1g30925, found in Arabidopsis thaliana (Mouse-ear cress).